A 303-amino-acid polypeptide reads, in one-letter code: Quinolinate synthase (303 aa).

Residues His25 and Ser42 each coordinate iminosuccinate. Residue Cys87 coordinates [4Fe-4S] cluster. Residues 113-115 (YVN) and Ser130 each bind iminosuccinate. Position 173 (Cys173) interacts with [4Fe-4S] cluster. Residues 199-201 (HPE) and Thr216 each bind iminosuccinate. Residue Cys261 coordinates [4Fe-4S] cluster.

The protein belongs to the quinolinate synthase family. Type 2 subfamily. The cofactor is [4Fe-4S] cluster.

It is found in the cytoplasm. It catalyses the reaction iminosuccinate + dihydroxyacetone phosphate = quinolinate + phosphate + 2 H2O + H(+). It functions in the pathway cofactor biosynthesis; NAD(+) biosynthesis; quinolinate from iminoaspartate: step 1/1. Its function is as follows. Catalyzes the condensation of iminoaspartate with dihydroxyacetone phosphate to form quinolinate. The sequence is that of Quinolinate synthase from Desulforudis audaxviator (strain MP104C).